Consider the following 146-residue polypeptide: Hemoglobin subunit beta (146 aa).

The Globin domain occupies 2-146; it reads PFSAHEEKLI…VAAALSAEYH (145 aa). H63 and H92 together coordinate heme b.

It belongs to the globin family. In terms of assembly, heterotetramer of two alpha chains and two beta chains. As to expression, red blood cells.

Its function is as follows. Involved in oxygen transport from the lung to the various peripheral tissues. In Caiman crocodilus (Spectacled caiman), this protein is Hemoglobin subunit beta (HBB).